The chain runs to 782 residues: MKFIKRKTKLLTITIGAVAVSSILLGGIFYGTSQKSPSSFGIASIDQKENFINKDNLDYQKARPSIKDSNLKEIPKPKPQPKPKPQPTPFPDPIPTPPKKEELKKPDIKPEEPKKPEIKPEPKPEPIPQPAPPIETKPKEELLPPNPPPPKEEPKPEPNPQPQPQQVPNNSNSRIIEINGVRVEAEVEVPPPRDIAEYDKQNNLVNPNPYINDSVGKIKNVKVTDELRKATGKLVQGNLGRWDYKHLINDLLTLKPEEIEKYVKNDKSGYYAKVWYRFSRLFESENVVNFLTEQGKKEYPEMKSKFVSKDHKYAWLYQHLDLTKFTQLSNESESYLKEGYTPDPDNAYVDENGKISSHAYSPAKGYNSVTSRMENDNWNRRVFGYKSWYGRTPGNLVEGNYPGWKKTNVTQEFHQYGVSDGDGITVNKLTREKTEDGRLNEGYVIDIDADNPQGYEKTKKLIQTLKEKNINITGYRIHNMGKSDSSQKFVDILKTLPNQLPLLELFFSAGSHNTSSLIALKDKKIKELGLFTLGNSLLDEWSINPNALRNVEWINSNDYNVSFNYKQGADIATRITFDTLAFDESDYNDNASDIKSKLKQINDGLRMVYWTRNNEPIFQGSFGPGLDPDHKESGNSYPQGLDFSRVPQIRSLRGLIFKDEQKTSNNKDRKLRRINFYNNSTTYKMSIEDLNEAGFNEHIVSGEPGEKSKITFSNGSGTTKIQIDGDQELSANGISNLSAMFNFAESLQRTIVVNNTNSPLANQLRNAGYSVESTTNAGLIDI.

The chain crosses the membrane as a helical span at residues 10 to 30; that stretch reads LLTITIGAVAVSSILLGGIFY. The span at 57 to 76 shows a compositional bias: basic and acidic residues; sequence LDYQKARPSIKDSNLKEIPK. A disordered region spans residues 57 to 171; that stretch reads LDYQKARPSI…PQPQQVPNNS (115 aa). The span at 77-97 shows a compositional bias: pro residues; the sequence is PKPQPKPKPQPTPFPDPIPTP. Positions 98 to 124 are enriched in basic and acidic residues; sequence PKKEELKKPDIKPEEPKKPEIKPEPKP. The span at 125 to 135 shows a compositional bias: pro residues; the sequence is EPIPQPAPPIE.

This sequence to U.parvum UU046.

It is found in the membrane. This is an uncharacterized protein from Ureaplasma parvum serovar 3 (strain ATCC 700970).